The sequence spans 147 residues: Alpha-amylase/trypsin inhibitor (147 aa).

Positions 1 to 21 (MASDHRRFVLSGAVLLSVLAV) are cleaved as a signal peptide.

The protein belongs to the protease inhibitor I6 (cereal trypsin/alpha-amylase inhibitor) family. Five disulfide bonds, which are essential for the inhibitor activity, are probably present. Endosperm.

The protein localises to the secreted. Its function is as follows. Alpha-amylase/trypsin inhibitor. The sequence is that of Alpha-amylase/trypsin inhibitor from Hordeum vulgare (Barley).